The primary structure comprises 527 residues: Probable T-complex protein 1 subunit beta (527 aa).

The protein belongs to the TCP-1 chaperonin family. In terms of assembly, heterooligomeric complex of about 850 to 900 kDa that forms two stacked rings, 12 to 16 nm in diameter.

It is found in the cytoplasm. Molecular chaperone; assists the folding of proteins upon ATP hydrolysis. Known to play a role, in vitro, in the folding of actin and tubulin. In Schizosaccharomyces pombe (strain 972 / ATCC 24843) (Fission yeast), this protein is Probable T-complex protein 1 subunit beta (cct2).